A 377-amino-acid chain; its full sequence is Homoserine O-succinyltransferase (377 aa).

The 310-residue stretch at Asn-50–Met-359 folds into the AB hydrolase-1 domain. Ser-156 acts as the Nucleophile in catalysis. Arg-226 contributes to the substrate binding site. Catalysis depends on residues Asp-321 and His-354. Asp-355 lines the substrate pocket.

The protein belongs to the AB hydrolase superfamily. MetX family. Homodimer.

The protein resides in the cytoplasm. It carries out the reaction L-homoserine + succinyl-CoA = O-succinyl-L-homoserine + CoA. It participates in amino-acid biosynthesis; L-methionine biosynthesis via de novo pathway; O-succinyl-L-homoserine from L-homoserine: step 1/1. Functionally, transfers a succinyl group from succinyl-CoA to L-homoserine, forming succinyl-L-homoserine. This chain is Homoserine O-succinyltransferase, found in Nitrosospira multiformis (strain ATCC 25196 / NCIMB 11849 / C 71).